A 257-amino-acid chain; its full sequence is Probable branched-chain amino acid transport ATP-binding protein LivG (257 aa).

The ABC transporter domain maps to 8 to 253 (LRTENIVKYF…VLSDPKVVEI (246 aa)). 40-47 (GPNGSGKS) lines the ATP pocket.

This sequence belongs to the ABC transporter superfamily. In terms of assembly, monomer.

Functionally, probable component of a branched-chain amino-acid transport system. In Methanocaldococcus jannaschii (strain ATCC 43067 / DSM 2661 / JAL-1 / JCM 10045 / NBRC 100440) (Methanococcus jannaschii), this protein is Probable branched-chain amino acid transport ATP-binding protein LivG (livG).